The chain runs to 426 residues: Histidine--tRNA ligase (426 aa).

This sequence belongs to the class-II aminoacyl-tRNA synthetase family. Homodimer.

It is found in the cytoplasm. The catalysed reaction is tRNA(His) + L-histidine + ATP = L-histidyl-tRNA(His) + AMP + diphosphate + H(+). The chain is Histidine--tRNA ligase from Chlorobium phaeovibrioides (strain DSM 265 / 1930) (Prosthecochloris vibrioformis (strain DSM 265)).